Consider the following 279-residue polypeptide: MAFQGTSRTLTQQSSAATSDDLQKILFSPEAIKKMATECDLGRHHWMRADNAISVRPLVPEVTHGRIASFFKSGYDVGELCSKGYMSVPQVLCAVTRTVSTDAEGSLRIYLADLGDKELSPIDGQCVSLHNHDLPALVSFQPTYDCPMETVGNRKRCFAVVIERHGYIGYTGTTASVCSNWQARFSSKNNNYTHIAAGKTLVLPFNRLAEQTKPSAVARLLKSQLNNIESSQYLLTNVKINQNARSESEELNVESPPAAIGSSSASRSEAFRPQVVNGL.

Residues 247–279 form a disordered region; that stretch reads ESEELNVESPPAAIGSSSASRSEAFRPQVVNGL. Residues 254–268 are compositionally biased toward low complexity; it reads ESPPAAIGSSSASRS.

The protein belongs to the cucumovirus movement protein family.

Its subcellular location is the host cell junction. The protein localises to the host plasmodesma. Its function is as follows. Transports viral genome to neighboring plant cells directly through plasmosdesmata, without any budding. The movement protein allows efficient cell to cell propagation, by bypassing the host cell wall barrier. Acts by forming a tubular structure at the host plasmodesmata, enlarging it enough to allow free passage of virion capsids. This is Movement protein from Cucumis sativus (Cucumber).